Here is a 290-residue protein sequence, read N- to C-terminus: 4-hydroxybenzoate octaprenyltransferase (290 aa).

A run of 9 helical transmembrane segments spans residues 20–40 (IGIL…AEGV), 43–63 (LDIL…GCVV), 92–112 (EALL…QPLN), 114–131 (LTIE…SYPF), 135–155 (FFAM…PMAF), 160–180 (GEVP…VIAY), 209–229 (VVGV…IGLL), 231–251 (NLGV…LYQY), and 266–286 (FLHN…DYLV).

It belongs to the UbiA prenyltransferase family. Requires Mg(2+) as cofactor.

It is found in the cell inner membrane. It carries out the reaction all-trans-octaprenyl diphosphate + 4-hydroxybenzoate = 4-hydroxy-3-(all-trans-octaprenyl)benzoate + diphosphate. It functions in the pathway cofactor biosynthesis; ubiquinone biosynthesis. Functionally, catalyzes the prenylation of para-hydroxybenzoate (PHB) with an all-trans polyprenyl group. Mediates the second step in the final reaction sequence of ubiquinone-8 (UQ-8) biosynthesis, which is the condensation of the polyisoprenoid side chain with PHB, generating the first membrane-bound Q intermediate 3-octaprenyl-4-hydroxybenzoate. The protein is 4-hydroxybenzoate octaprenyltransferase of Nitrosospira multiformis (strain ATCC 25196 / NCIMB 11849 / C 71).